The primary structure comprises 828 residues: ADP-ribosylation factor GTPase-activating protein AGD1 (828 aa).

One can recognise a BAR domain in the interval methionine 1–glutamine 225. A coiled-coil region spans residues glutamine 225 to serine 255. A disordered region spans residues glutamine 247–serine 268. The PH domain maps to glutamine 288–alanine 425. Serine 441 carries the phosphoserine modification. The Arf-GAP domain maps to glutamate 498–glutamine 643. A C4-type zinc finger spans residues cysteine 513–cysteine 536. Residues threonine 590 to proline 600 are compositionally biased toward low complexity. The interval threonine 590–arginine 611 is disordered. ANK repeat units follow at residues asparagine 735–alanine 764 and lysine 768–alanine 797.

As to expression, expressed in roots, but not in hypocotyls or cotyledons. Low levels detected in leaf and shoot apical meristems and in siliques.

It localises to the endosome. Probable GTPase-activating protein. Regulator of membrane trafficking. Required for maintaining a straight growth of root hairs. The polypeptide is ADP-ribosylation factor GTPase-activating protein AGD1 (AGD1) (Arabidopsis thaliana (Mouse-ear cress)).